The primary structure comprises 61 residues: Large ribosomal subunit protein uL30 (61 aa).

The protein belongs to the universal ribosomal protein uL30 family. As to quaternary structure, part of the 50S ribosomal subunit.

This chain is Large ribosomal subunit protein uL30, found in Bordetella avium (strain 197N).